A 1020-amino-acid chain; its full sequence is Protein translocase subunit SecA (1020 aa).

ATP contacts are provided by residues Q99, 117 to 121 (GEGKT), and D633. Residues 963–992 (NEQPSQEMAADEETQEESKIEENKPEPIVV) form a disordered region. Residues 978 to 987 (EESKIEENKP) show a composition bias toward basic and acidic residues. Residues C1002, C1004, C1013, and C1014 each contribute to the Zn(2+) site.

It belongs to the SecA family. Monomer and homodimer. Part of the essential Sec protein translocation apparatus which comprises SecA, SecYEG and auxiliary proteins SecDF. Other proteins may also be involved. Zn(2+) serves as cofactor.

It is found in the cell inner membrane. Its subcellular location is the cytoplasm. The enzyme catalyses ATP + H2O + cellular proteinSide 1 = ADP + phosphate + cellular proteinSide 2.. Functionally, part of the Sec protein translocase complex. Interacts with the SecYEG preprotein conducting channel. Has a central role in coupling the hydrolysis of ATP to the transfer of proteins into and across the cell membrane, serving as an ATP-driven molecular motor driving the stepwise translocation of polypeptide chains across the membrane. In Protochlamydia amoebophila (strain UWE25), this protein is Protein translocase subunit SecA.